The primary structure comprises 371 residues: MDFQLQATDNNARAGLLNLAHSQVATPVFMPVGTQGCIKSLDATDMQGILGAKLILANTYHLYLRPGEKVVEELGGLHRFAQFHGSFLTDSGGFQAFSLSDNVKLQEDGIVFKSHIDGSKHLFTPAKVLDIQYSLNSDIMMVLDDLVGLPAPLKRLEESIKRSAKWANLSLEYHKQKNRPNNNLFAIIQGGTHLKMRSLSVGLTHEGFDGYAIGGLAVGESADEMLETIAHTAPLLPKDKPRYLMGVGTPENILDAIGLGVDMFDCVMPTRNARNATLFTHSGKISIKNAPYKLDDTPIEENCACYTCKRYSKAYLHHLFRAKELTYARLASLHNLHFYLELVKNARNAILEKRFLSFKKEFLKKYHSRSH.

Aspartate 90 acts as the Proton acceptor in catalysis. Residues 90 to 94, aspartate 144, glutamine 189, and glycine 215 each bind substrate; that span reads DSGGF. The RNA binding stretch occupies residues 246–252; it reads GVGTPEN. The Nucleophile role is filled by aspartate 265. An RNA binding; important for wobble base 34 recognition region spans residues 270–274; sequence TRNAR. Residues cysteine 303, cysteine 305, cysteine 308, and histidine 334 each coordinate Zn(2+).

This sequence belongs to the queuine tRNA-ribosyltransferase family. As to quaternary structure, homodimer. Within each dimer, one monomer is responsible for RNA recognition and catalysis, while the other monomer binds to the replacement base PreQ1. Zn(2+) is required as a cofactor.

The catalysed reaction is 7-aminomethyl-7-carbaguanine + guanosine(34) in tRNA = 7-aminomethyl-7-carbaguanosine(34) in tRNA + guanine. It functions in the pathway tRNA modification; tRNA-queuosine biosynthesis. In terms of biological role, catalyzes the base-exchange of a guanine (G) residue with the queuine precursor 7-aminomethyl-7-deazaguanine (PreQ1) at position 34 (anticodon wobble position) in tRNAs with GU(N) anticodons (tRNA-Asp, -Asn, -His and -Tyr). Catalysis occurs through a double-displacement mechanism. The nucleophile active site attacks the C1' of nucleotide 34 to detach the guanine base from the RNA, forming a covalent enzyme-RNA intermediate. The proton acceptor active site deprotonates the incoming PreQ1, allowing a nucleophilic attack on the C1' of the ribose to form the product. After dissociation, two additional enzymatic reactions on the tRNA convert PreQ1 to queuine (Q), resulting in the hypermodified nucleoside queuosine (7-(((4,5-cis-dihydroxy-2-cyclopenten-1-yl)amino)methyl)-7-deazaguanosine). The chain is Queuine tRNA-ribosyltransferase from Helicobacter pylori (strain Shi470).